We begin with the raw amino-acid sequence, 313 residues long: Dihydroorotate dehydrogenase (fumarate) (313 aa).

Residues Ala20 and 44-45 (KS) each bind FMN. Substrate-binding positions include Lys44, 68–72 (NSMGL), and Asn128. Residue Asn128 participates in FMN binding. Residue Cys131 is the Nucleophile of the active site. A substrate-binding site is contributed by Asn133. The FMN site is built by Lys165 and Val194. Residue 195–196 (NS) coordinates substrate. Residues Gly223, Cys249, 249–251 (CGG), and 272–273 (GT) each bind FMN.

This sequence belongs to the dihydroorotate dehydrogenase family. Type 1 subfamily. Homodimer. It depends on FMN as a cofactor.

It localises to the cytoplasm. It carries out the reaction (S)-dihydroorotate + fumarate = orotate + succinate. It participates in pyrimidine metabolism; UMP biosynthesis via de novo pathway. In terms of biological role, catalyzes the conversion of dihydroorotate to orotate with fumarate as the electron acceptor. Molecular oxygen can replace fumarate in vitro. This chain is Dihydroorotate dehydrogenase (fumarate), found in Trypanosoma brucei brucei (strain 927/4 GUTat10.1).